Here is a 1288-residue protein sequence, read N- to C-terminus: Probable serine/threonine-protein kinase drkD (1288 aa).

Residues Met1–Gln12 are compositionally biased toward polar residues. Disordered regions lie at residues Met1–Pro132, Phe156–Ile223, and Ser269–Glu386. 2 stretches are compositionally biased toward low complexity: residues Thr13–Ser79 and Phe156–Pro220. Residues Glu221 to Lys248 adopt a coiled-coil conformation. Residues Gly271 to Asn291 show a composition bias toward polar residues. Residues Pro302–Ser343 are compositionally biased toward basic and acidic residues. Over residues Ala344–Val354 the composition is skewed to polar residues. Residues Glu376–Glu386 show a composition bias toward acidic residues. LRR repeat units lie at residues Lys400 to Ile421, Glu423 to Leu444, His446 to Pro468, Arg469 to Leu490, Ser492 to His513, Asn517 to Ser538, and His540 to Ser561. Disordered regions lie at residues Trp690–Gly717, Pro733–Gln764, and Gln796–Gln825. Polar residues-rich tracts occupy residues Ser701–Gly717 and Pro733–Asn757. The region spanning Ile851–Ile1104 is the Protein kinase domain. ATP contacts are provided by residues Ile857 to Val865 and Lys878. Asp974 acts as the Proton acceptor in catalysis. 2 disordered regions span residues Gly1118–Ala1141 and Gln1245–Lys1288. Residues Asn1257–Asn1268 show a composition bias toward low complexity. Over residues Ser1269 to Met1282 the composition is skewed to polar residues.

It belongs to the protein kinase superfamily. TKL Ser/Thr protein kinase family.

The catalysed reaction is L-seryl-[protein] + ATP = O-phospho-L-seryl-[protein] + ADP + H(+). The enzyme catalyses L-threonyl-[protein] + ATP = O-phospho-L-threonyl-[protein] + ADP + H(+). This is Probable serine/threonine-protein kinase drkD (drkD) from Dictyostelium discoideum (Social amoeba).